We begin with the raw amino-acid sequence, 790 residues long: PGC-1 and ERR-induced regulator in muscle protein 1 (790 aa).

Disordered regions lie at residues 38–391 (LLSS…TPIS), 425–449 (VASS…STPV), 507–545 (SVAG…EAVA), and 626–648 (QRSR…APIP). A compositionally biased stretch (low complexity) spans 40–52 (SSDIDQGDSSGSS). Polar residues-rich tracts occupy residues 80-89 (ATQQPVSRSQ) and 98-107 (TGQQTPSTSA). Low complexity predominate over residues 111–123 (APPSLGPGASPPS). The span at 146 to 157 (APRPPGEPPGSP) shows a compositional bias: pro residues. Residues 158 to 169 (KSPGHSTGSQRP) are compositionally biased toward low complexity. Positions 170-179 (PDSPGAPPRS) are enriched in pro residues. Positions 366-391 (KPQSDTAVSTPASEPQSSVALSTPIS) are enriched in polar residues. Over residues 515-532 (KPGSGQASARPSAPQTAT) the composition is skewed to polar residues. The span at 635 to 648 (EPLPRADPVPAPIP) shows a compositional bias: pro residues.

In terms of tissue distribution, muscle-specific expression is increased by endurance exercise.

The protein resides in the cytoplasm. It is found in the nucleus. Regulates the expression of selective PPARGC1A/B and ESRRA/B/G target genes with roles in glucose and lipid metabolism, energy transfer, contractile function, muscle mitochondrial biogenesis and oxidative capacity. Required for the efficient induction of MT-CO2, MT-CO3, COX4I1, TFB1M, TFB2M, POLRMT and SIRT3 by PPARGC1A. Positively regulates the PPARGC1A/ESRRG-induced expression of CKMT2, TNNI3 and SLC2A4 and negatively regulates the PPARGC1A/ESRRG-induced expression of PDK4. This chain is PGC-1 and ERR-induced regulator in muscle protein 1 (PERM1), found in Homo sapiens (Human).